We begin with the raw amino-acid sequence, 293 residues long: Small ribosomal subunit protein uS2 (293 aa).

Positions 219–293 (IASAKPDEPY…WATPKTEDWA (75 aa)) are disordered.

This sequence belongs to the universal ribosomal protein uS2 family. As to quaternary structure, component of the small ribosomal subunit. Mature ribosomes consist of a small (40S) and a large (60S) subunit. The 40S subunit contains about 33 different proteins and 1 molecule of RNA (18S). The 60S subunit contains about 49 different proteins and 3 molecules of RNA (28S, 5.8S and 5S). Interacts with ribosomal protein S21.

The protein resides in the cytoplasm. In terms of biological role, required for the assembly and/or stability of the 40S ribosomal subunit. Required for the processing of the 20S rRNA-precursor to mature 18S rRNA in a late step of the maturation of 40S ribosomal subunits. The chain is Small ribosomal subunit protein uS2 from Hydra viridissima (Green hydra).